The sequence spans 235 residues: Large ribosomal subunit protein uL1 (235 aa).

Belongs to the universal ribosomal protein uL1 family. As to quaternary structure, part of the 50S ribosomal subunit.

In terms of biological role, binds directly to 23S rRNA. The L1 stalk is quite mobile in the ribosome, and is involved in E site tRNA release. Functionally, protein L1 is also a translational repressor protein, it controls the translation of the L11 operon by binding to its mRNA. The chain is Large ribosomal subunit protein uL1 from Synechococcus sp. (strain CC9902).